Here is a 339-residue protein sequence, read N- to C-terminus: Deoxyguanosinetriphosphate triphosphohydrolase-like protein (339 aa).

The 112-residue stretch at 75–186 (RLTHTLEVAQ…VQISDKIAYI (112 aa)) folds into the HD domain.

Belongs to the dGTPase family. Type 2 subfamily.

The chain is Deoxyguanosinetriphosphate triphosphohydrolase-like protein from Caldanaerobacter subterraneus subsp. tengcongensis (strain DSM 15242 / JCM 11007 / NBRC 100824 / MB4) (Thermoanaerobacter tengcongensis).